Consider the following 151-residue polypeptide: Epigen (151 aa).

A signal peptide spans Met-1–Ser-18. At Glu-19–Arg-108 the chain is on the extracellular side. A glycan (N-linked (GlcNAc...) asparagine) is linked at Asn-39. One can recognise an EGF-like domain in the interval Leu-54–Glu-94. Intrachain disulfides connect Cys-58-Cys-71, Cys-66-Cys-82, and Cys-84-Cys-93. Residues Tyr-109–Cys-129 traverse the membrane as a helical segment. The Cytoplasmic portion of the chain corresponds to Tyr-130–Leu-151.

The protein localises to the membrane. Its function is as follows. Promotes the growth of epithelial cells. In Gallus gallus (Chicken), this protein is Epigen (EPGN).